The following is a 467-amino-acid chain: 55 kDa erythrocyte membrane protein (467 aa).

The PDZ domain occupies 73 to 154; it reads EVAFEKNQSE…VVTMKIIPRP (82 aa). The 71-residue stretch at 160 to 230 folds into the SH3 domain; the sequence is PCEMYMRGQF…PSPELQEWRA (71 aa). The Guanylate kinase-like domain maps to 283 to 452; sequence RKTLVLIGAP…SVKIVEEALE (170 aa).

Belongs to the MAGUK family. Post-translationally, extensively palmitoylated.

It is found in the membrane. In terms of biological role, may play a role in the regulation of neutrophil polarization. The chain is 55 kDa erythrocyte membrane protein (mpp1) from Takifugu rubripes (Japanese pufferfish).